Reading from the N-terminus, the 124-residue chain is Ragulator complex protein LAMTOR3 (124 aa).

The required for interaction with LAMTOR2 stretch occupies residues 57-70 (TDQGSKLGLSKNKS).

Belongs to the LAMTOR3 family. As to quaternary structure, part of the Ragulator complex composed of LAMTOR1, LAMTOR2, LAMTOR3, LAMTOR4 and LAMTOR5. LAMTOR4 and LAMTOR5 form a heterodimer that interacts, through LAMTOR1, with a LAMTOR2, LAMTOR3 heterodimer. Interacts with LAMTOR1 and LAMTOR2; the interaction is direct. The Ragulator complex interacts with both the mTORC1 complex and heterodimers constituted of the Rag GTPases RagA/RRAGA, RagB/RRAGB, RagC/RRAGC and RagD/RRAGD; regulated by amino acid availability. The Ragulator complex interacts with SLC38A9; the probable amino acid sensor. Component of the lysosomal folliculin complex (LFC), composed of FLCN, FNIP1 (or FNIP2), RagA/RRAGA or RagB/RRAGB GDP-bound, RagC/RRAGC or RagD/RRAGD GTP-bound, and Ragulator. Interacts with MAP2K1/MEK1 and MAPK2. Interacts with MORG1.

The protein localises to the late endosome membrane. Functionally, as part of the Ragulator complex it is involved in amino acid sensing and activation of mTORC1, a signaling complex promoting cell growth in response to growth factors, energy levels, and amino acids. Activated by amino acids through a mechanism involving the lysosomal V-ATPase, the Ragulator plays a dual role for the small GTPases Rag (RagA/RRAGA, RagB/RRAGB, RagC/RRAGC and/or RagD/RRAGD): it (1) acts as a guanine nucleotide exchange factor (GEF), activating the small GTPases Rag and (2) mediates recruitment of Rag GTPases to the lysosome membrane. Activated Ragulator and Rag GTPases function as a scaffold recruiting mTORC1 to lysosomes where it is in turn activated. Adapter protein that enhances the efficiency of the MAP kinase cascade facilitating the activation of MAPK2. The sequence is that of Ragulator complex protein LAMTOR3 from Homo sapiens (Human).